The sequence spans 326 residues: tRNA dimethylallyltransferase 2 (326 aa).

14-21 contributes to the ATP binding site; that stretch reads GPTASGKT. Residue 16–21 participates in substrate binding; it reads TASGKT. Residues 39–42 are interaction with substrate tRNA; sequence DSMQ.

The protein belongs to the IPP transferase family. As to quaternary structure, monomer. Mg(2+) is required as a cofactor.

The catalysed reaction is adenosine(37) in tRNA + dimethylallyl diphosphate = N(6)-dimethylallyladenosine(37) in tRNA + diphosphate. Functionally, catalyzes the transfer of a dimethylallyl group onto the adenine at position 37 in tRNAs that read codons beginning with uridine, leading to the formation of N6-(dimethylallyl)adenosine (i(6)A). The sequence is that of tRNA dimethylallyltransferase 2 from Geotalea daltonii (strain DSM 22248 / JCM 15807 / FRC-32) (Geobacter daltonii).